The chain runs to 505 residues: Glycerol kinase (505 aa).

Position 14 (Thr-14) interacts with ADP. Thr-14, Thr-15, and Ser-16 together coordinate ATP. Thr-14 is a binding site for sn-glycerol 3-phosphate. Arg-18 serves as a coordination point for ADP. The sn-glycerol 3-phosphate site is built by Arg-84, Glu-85, Tyr-136, and Asp-246. Residues Arg-84, Glu-85, Tyr-136, Asp-246, and Gln-247 each contribute to the glycerol site. The ADP site is built by Thr-268 and Gly-311. The ATP site is built by Thr-268, Gly-311, Gln-315, and Gly-412. Residues Gly-412 and Asn-416 each coordinate ADP.

It belongs to the FGGY kinase family.

It carries out the reaction glycerol + ATP = sn-glycerol 3-phosphate + ADP + H(+). Its pathway is polyol metabolism; glycerol degradation via glycerol kinase pathway; sn-glycerol 3-phosphate from glycerol: step 1/1. Inhibited by fructose 1,6-bisphosphate (FBP). Functionally, key enzyme in the regulation of glycerol uptake and metabolism. Catalyzes the phosphorylation of glycerol to yield sn-glycerol 3-phosphate. This is Glycerol kinase from Vibrio cholerae serotype O1 (strain M66-2).